A 243-amino-acid chain; its full sequence is Tryptophan synthase alpha chain (243 aa).

Residues Glu-32 and Asp-43 each act as proton acceptor in the active site.

Belongs to the TrpA family. In terms of assembly, tetramer of two alpha and two beta chains.

The protein localises to the plastid. It is found in the chloroplast. It catalyses the reaction (1S,2R)-1-C-(indol-3-yl)glycerol 3-phosphate + L-serine = D-glyceraldehyde 3-phosphate + L-tryptophan + H2O. It participates in amino-acid biosynthesis; L-tryptophan biosynthesis; L-tryptophan from chorismate: step 5/5. In terms of biological role, the alpha subunit is responsible for the aldol cleavage of indoleglycerol phosphate to indole and glyceraldehyde 3-phosphate. The chain is Tryptophan synthase alpha chain from Cyanidioschyzon merolae (strain NIES-3377 / 10D) (Unicellular red alga).